The chain runs to 201 residues: Ras-related protein Rab-9A (201 aa).

At alanine 2 the chain carries N-acetylalanine. GTP is bound by residues glycine 17, valine 18, glycine 19, lysine 20, serine 21, serine 22, serine 34, histidine 38, and threonine 39. Serine 21 is a binding site for Mg(2+). A Switch 1 motif is present at residues 31–42 (KFDSQLFHTIGV). A Phosphoserine modification is found at serine 34. Mg(2+) contacts are provided by threonine 39 and aspartate 62. A Switch 2 motif is present at residues 64 to 78 (AGQERFRSLRTPFYR). Residues glycine 65, asparagine 124, lysine 125, aspartate 127, and lysine 156 each coordinate GTP. A Phosphoserine modification is found at serine 179. Threonine 187 carries the post-translational modification Phosphothreonine. Residues cysteine 200 and cysteine 201 are each lipidated (S-geranylgeranyl cysteine).

This sequence belongs to the small GTPase superfamily. Rab family. In terms of assembly, interacts (preferentially in its GTP-bound form) with GCC2 (via its GRIP domain). Interacts (GTP-bound form) with SGSM1; the GDP-bound form has much lower affinity for SGSM1. Interacts with SGSM2. The GTP-bound form but not the GDP-bound form interacts with HPS4 and the BLOC-3 complex (heterodimer of HPS1 and HPS4) but does not interact with HPS1 alone. Interacts (GTP-bound form) with NDE1; two RAB9A-GTP molecules lie on the opposite sides of the NDE1 homodimer; the interaction leads to RAB9A-dynein motor tethering. Interacts (GTP-bound form) with NDEL1. Mg(2+) is required as a cofactor.

The protein resides in the cell membrane. Its subcellular location is the endoplasmic reticulum membrane. It localises to the golgi apparatus membrane. The protein localises to the late endosome. It is found in the cytoplasmic vesicle. The protein resides in the phagosome membrane. Its subcellular location is the phagosome. It localises to the cytoplasmic vesicle membrane. The protein localises to the melanosome. It catalyses the reaction GTP + H2O = GDP + phosphate + H(+). Its activity is regulated as follows. Regulated by guanine nucleotide exchange factors (GEFs) which promote the exchange of bound GDP for free GTP. Regulated by GTPase activating proteins (GAPs) which increase the GTP hydrolysis activity. Inhibited by GDP dissociation inhibitors (GDIs). Functionally, the small GTPases Rab are key regulators of intracellular membrane trafficking, from the formation of transport vesicles to their fusion with membranes. Rabs cycle between an inactive GDP-bound form and an active GTP-bound form that is able to recruit to membranes different sets of downstream effectors directly responsible for vesicle formation, movement, tethering and fusion. RAB9A is involved in the transport of proteins between the endosomes and the trans-Golgi network (TGN). Specifically uses NDE1/NDEL1 as an effector to interact with the dynein motor complex in order to control retrograde trafficking of RAB9-associated late endosomes to the TGN. Involved in the recruitment of SGSM2 to melanosomes and is required for the proper trafficking of melanogenic enzymes TYR, TYRP1 and DCT/TYRP2 to melanosomes in melanocytes. This is Ras-related protein Rab-9A from Rattus norvegicus (Rat).